The following is a 186-amino-acid chain: Large ribosomal subunit protein uL10 (186 aa).

This sequence belongs to the universal ribosomal protein uL10 family. Part of the ribosomal stalk of the 50S ribosomal subunit. The N-terminus interacts with L11 and the large rRNA to form the base of the stalk. The C-terminus forms an elongated spine to which L12 dimers bind in a sequential fashion forming a multimeric L10(L12)X complex.

Its function is as follows. Forms part of the ribosomal stalk, playing a central role in the interaction of the ribosome with GTP-bound translation factors. The sequence is that of Large ribosomal subunit protein uL10 from Nitrosococcus oceani (strain ATCC 19707 / BCRC 17464 / JCM 30415 / NCIMB 11848 / C-107).